Reading from the N-terminus, the 207-residue chain is MRELTKRQSEIYNYIKQVVQTKGYPPSVREIGEAVGLASSSTVHGHLSRLEEKGYIRRDPTKPRAIEIVSDQTNDNINMEETIHVPVIGKVTAGVPITAVENIEEYFPLPEHLTSTHNSDIFILNVVGDSMIEAGILDGDKVIVRSQTIAENGDIIVAMTEEDEATVKRFYKEKNRYRLQPENSTMEPIYLDNVAVIGKVIGLYREM.

The H-T-H motif DNA-binding region spans 28–48 (VREIGEAVGLASSSTVHGHLS). Active-site for autocatalytic cleavage activity residues include Ser-130 and Lys-168.

It belongs to the peptidase S24 family. As to quaternary structure, homodimer.

It catalyses the reaction Hydrolysis of Ala-|-Gly bond in repressor LexA.. In terms of biological role, represses a number of genes involved in the response to DNA damage (SOS response), including recA and lexA. In the presence of single-stranded DNA, RecA interacts with LexA causing an autocatalytic cleavage which disrupts the DNA-binding part of LexA, leading to derepression of the SOS regulon and eventually DNA repair. The chain is LexA repressor from Staphylococcus aureus (strain MSSA476).